Reading from the N-terminus, the 856-residue chain is Bifunctional uridylyltransferase/uridylyl-removing enzyme (856 aa).

The segment at 1-320 (MTLSAAPLQH…YCQVPRVTQH (320 aa)) is uridylyltransferase. Positions 321 to 678 (ISEYFHAVNG…ARLADDHEGL (358 aa)) are uridylyl-removing. Residues 439-561 (VDEHILMVVR…VRTPRRLAAL (123 aa)) form the HD domain. ACT domains are found at residues 679 to 760 (QVLI…LPPQ) and 788 to 856 (ILSI…ALRI).

Belongs to the GlnD family. The cofactor is Mg(2+).

The enzyme catalyses [protein-PII]-L-tyrosine + UTP = [protein-PII]-uridylyl-L-tyrosine + diphosphate. The catalysed reaction is [protein-PII]-uridylyl-L-tyrosine + H2O = [protein-PII]-L-tyrosine + UMP + H(+). With respect to regulation, uridylyltransferase (UTase) activity is inhibited by glutamine, while glutamine activates uridylyl-removing (UR) activity. Its function is as follows. Modifies, by uridylylation and deuridylylation, the PII regulatory proteins (GlnB and homologs), in response to the nitrogen status of the cell that GlnD senses through the glutamine level. Under low glutamine levels, catalyzes the conversion of the PII proteins and UTP to PII-UMP and PPi, while under higher glutamine levels, GlnD hydrolyzes PII-UMP to PII and UMP (deuridylylation). Thus, controls uridylylation state and activity of the PII proteins, and plays an important role in the regulation of nitrogen assimilation and metabolism. In Chromobacterium violaceum (strain ATCC 12472 / DSM 30191 / JCM 1249 / CCUG 213 / NBRC 12614 / NCIMB 9131 / NCTC 9757 / MK), this protein is Bifunctional uridylyltransferase/uridylyl-removing enzyme.